The sequence spans 971 residues: Valine--tRNA ligase (971 aa).

The 'HIGH' region motif lies at 55 to 65 (PNVTGSLHMGH). The short motif at 572 to 576 (KMSKS) is the 'KMSKS' region element. An ATP-binding site is contributed by lysine 575. A coiled-coil region spans residues 906–933 (KAELGRLQKDLDKVQKQHDQIASKLANE).

The protein belongs to the class-I aminoacyl-tRNA synthetase family. ValS type 1 subfamily. As to quaternary structure, monomer.

It is found in the cytoplasm. The catalysed reaction is tRNA(Val) + L-valine + ATP = L-valyl-tRNA(Val) + AMP + diphosphate. Catalyzes the attachment of valine to tRNA(Val). As ValRS can inadvertently accommodate and process structurally similar amino acids such as threonine, to avoid such errors, it has a 'posttransfer' editing activity that hydrolyzes mischarged Thr-tRNA(Val) in a tRNA-dependent manner. The protein is Valine--tRNA ligase of Acinetobacter baylyi (strain ATCC 33305 / BD413 / ADP1).